Here is a 66-residue protein sequence, read N- to C-terminus: Large ribosomal subunit protein uL29 (66 aa).

This sequence belongs to the universal ribosomal protein uL29 family.

This is Large ribosomal subunit protein uL29 from Rhizobium johnstonii (strain DSM 114642 / LMG 32736 / 3841) (Rhizobium leguminosarum bv. viciae).